The sequence spans 408 residues: Succinylornithine transaminase (408 aa).

Residue lysine 252 is modified to N6-(pyridoxal phosphate)lysine.

The protein belongs to the class-III pyridoxal-phosphate-dependent aminotransferase family. AstC subfamily. The cofactor is pyridoxal 5'-phosphate.

The enzyme catalyses N(2)-succinyl-L-ornithine + 2-oxoglutarate = N-succinyl-L-glutamate 5-semialdehyde + L-glutamate. It functions in the pathway amino-acid degradation; L-arginine degradation via AST pathway; L-glutamate and succinate from L-arginine: step 3/5. In terms of biological role, catalyzes the transamination of N(2)-succinylornithine and alpha-ketoglutarate into N(2)-succinylglutamate semialdehyde and glutamate. Can also act as an acetylornithine aminotransferase. The protein is Succinylornithine transaminase of Salmonella choleraesuis (strain SC-B67).